A 258-amino-acid polypeptide reads, in one-letter code: Imidazole glycerol phosphate synthase subunit HisF (258 aa).

Catalysis depends on residues aspartate 11 and aspartate 130.

The protein belongs to the HisA/HisF family. In terms of assembly, heterodimer of HisH and HisF.

It localises to the cytoplasm. It catalyses the reaction 5-[(5-phospho-1-deoxy-D-ribulos-1-ylimino)methylamino]-1-(5-phospho-beta-D-ribosyl)imidazole-4-carboxamide + L-glutamine = D-erythro-1-(imidazol-4-yl)glycerol 3-phosphate + 5-amino-1-(5-phospho-beta-D-ribosyl)imidazole-4-carboxamide + L-glutamate + H(+). Its pathway is amino-acid biosynthesis; L-histidine biosynthesis; L-histidine from 5-phospho-alpha-D-ribose 1-diphosphate: step 5/9. Its function is as follows. IGPS catalyzes the conversion of PRFAR and glutamine to IGP, AICAR and glutamate. The HisF subunit catalyzes the cyclization activity that produces IGP and AICAR from PRFAR using the ammonia provided by the HisH subunit. The sequence is that of Imidazole glycerol phosphate synthase subunit HisF from Yersinia pestis (strain Pestoides F).